The chain runs to 1724 residues: MLKCIPLWRCNRHVESVDKRHCSLTAVPDEIYRYNRSLEELLLDANQLRELPKPFFRLHNLRKLGLSDNEIQKLPPDVANFTQLVELDISRNDISEIPENIKFCQSLEIADFSGNPLTRLPDGFTQLRGLAHLSLNDVSLQSLPNDIGNLSNLVTLELRENLLKSLPSSLSFLVKLEQLDLGSNVLEVLPDTLGALPNLRELWLDRNQLSSLPPELGNLRQLVCLDVSENRLSELPTEISGLIALTDLLLSENLLEILPDSIGSLKKLSILKVNQNRLVHLTDSIGECENLTELMLTENLLQSLPRSLGKLKKLTNLNVDRNRLSSVPAELGGCVSLNVLSLRDNRLGKLPPELANATELHVLDVAGNRLQNLPFALANLNLKAMWLAENQSQPMLKFQTEDDEQTGEKVLTCYLLPQQPSSSLENLLERSVDEAWPTDTNLNRVSVIQFRDDSKHEEEDDETAADKRGLQRRATPHPSELKVMKNVIEARRNEAYTARPDEDLESPDAEEKRLSGLSNQSHDSQASSSTTSATSHEDKQGINSTGVELNDGQVQEEEDLDEMEVEYTEPTVHFAEEPIIRGGDEDDDYDNDDDDAERSDEVSQTPSFPAEKQRLIRKDTPHYKKHFKITKLPKPETVAALLQGFSHDGLSPTAHTPENERDGEDDEEEEEDEDEEDDLHTPFQHRLDAAELEDIRMSQMNSSLQPVKGVSFDQVNNLLIEPARIEEEELTLSILRQTGGLGISIAGGKGSTPYKGDDEGIFISRVSEEGPAARAGVKVGDKLLEVNGVDLHGAEHHTAVEALRNSGAAVVMTVLRERMVEPENAITTTPLRPEDDYFPRERRSSGLPFLLDPDCPAVSTGPAQRLATCLIRNDKGLGFSIAGGKGSTLYRVGDTGIFISRIAEGGAAHRDNILQVGDRVISINGVDMTEARHDQAVALLTGTSPTITLVVDREQSSVGGASPRTRPHSPPPPEPSDSPEQEDGGDEHLGNHLNCPMEDEYPIEEVTLIKAGGPLGLSIVGGSDHASHPFGINEPGVFISKVIPNGLASQSGLRVGDRILEVNSIDLRHATHQEAVRALLSNKQEIRMLVRRDPSPPGMQEIVIHKQPGEKLGISIRGGAKGHAGNPFDPTDEGIFISKVSSNGAAARDGRLRVGMRILEVGNNSLLGMTHTEAVRVLRASGDSLVMLICDGFDPKSASTIEASPGVIANPFAAGIVRKNSMESISSVDRDLSPEEIDIMQKEVEMVRETSQWEREEMEKVSLSSGPLKLDYKTLAALPTTSLQKVNRASPSEPFRIDSPVRDAAHSPHNSQSNIHFPSNANTKDNASTKPGAIQPLSRVRPPVSPASQDGHSSPNPFQHGLSPINSQTTDLYSPRNNVSAKQPSPETPSPLGRHSPEQRSFKDRQKYFEIDVKQQTPDKPKPRISLVGEDDLKKMKEEEAKRIEQRAREFMLDEDEEEEEEDLAKQVAHMKAHGKVVLDGVEYKVESLGSPTSRQCATPPNYSATPPSHCGSSGPSSIDGKGDSQRNSVEDSFRLEQRPNSMTGLIPVYPGESAAPIRTAKAERRHQDRLRMQSPELTVALDKELSPAEKRALEAEKRAMWRAARMKSLEQDALKAQMVIAKSKEGKKRGTLDQLSESPSPAPTPSPTPMEDISPRTVTSPGRLSPGAADDVHFMDESSSNAVSVIDPEVPVAATSALEEMALYSNKRKLRQGRRSLEAPVPT.

Residues 1–821 (MLKCIPLWRC…MTVLRERMVE (821 aa)) are sufficient for targeting to adherens junction. LRR repeat units lie at residues 11–34 (NRHV…IYRY), 35–58 (NRSL…FFRL), 59–81 (HNLR…VANF), 83–105 (QLVE…KFCQ), 107–127 (LEIA…FTQL), 128–150 (RGLA…IGNL), 151–174 (SNLV…SFLV), 176–196 (LEQL…LGAL), 197–219 (PNLR…LGNL), 221–242 (QLVC…ISGL), 244–265 (ALTD…IGSL), 266–288 (KKLS…IGEC), 289–311 (ENLT…LGKL), 312–334 (KKLT…LGGC), 336–357 (SLNV…LANA), 359–380 (ELHV…LANL), and 382–405 (LKAM…DDEQ). Disordered stretches follow at residues 451–484 (RDDS…LKVM), 496–620 (YTAR…RKDT), and 646–683 (SHDG…HTPF). Residues 518 to 534 (SNQSHDSQASSSTTSAT) are compositionally biased toward low complexity. The span at 554-567 (VQEEEDLDEMEVEY) shows a compositional bias: acidic residues. Residues 574–583 (FAEEPIIRGG) are compositionally biased toward basic and acidic residues. Over residues 584 to 598 (DEDDDYDNDDDDAER) the composition is skewed to acidic residues. A compositionally biased stretch (basic and acidic residues) spans 611-620 (EKQRLIRKDT). Over residues 661-678 (RDGEDDEEEEEDEDEEDD) the composition is skewed to acidic residues. PDZ domains are found at residues 731–818 (TLSI…LRER), 867–955 (ATCL…DREQ), 1005–1094 (EVTL…RRDP), and 1101–1193 (EIVI…CDGF). Residues 955–995 (QSSVGGASPRTRPHSPPPPEPSDSPEQEDGGDEHLGNHLNC) are disordered. Disordered stretches follow at residues 1283-1407 (LQKV…DRQK), 1414-1433 (KQQT…EDDL), 1449-1468 (REFM…AKQV), and 1488-1555 (SLGS…GESA). A compositionally biased stretch (basic and acidic residues) spans 1295–1306 (FRIDSPVRDAAH). 3 stretches are compositionally biased toward polar residues: residues 1308–1329 (PHNS…NAST), 1346–1357 (PASQDGHSSPNP), and 1364–1385 (PINS…KQPS). The segment covering 1395 to 1407 (HSPEQRSFKDRQK) has biased composition (basic and acidic residues). The stretch at 1430–1461 (EDDLKKMKEEEAKRIEQRAREFMLDEDEEEEE) forms a coiled coil. The segment covering 1453-1463 (LDEDEEEEEED) has biased composition (acidic residues). Positions 1490–1506 (GSPTSRQCATPPNYSAT) are enriched in polar residues. Residues 1507–1518 (PPSHCGSSGPSS) show a composition bias toward low complexity. The span at 1521-1538 (GKGDSQRNSVEDSFRLEQ) shows a compositional bias: basic and acidic residues. Serine 1609 bears the Phosphoserine mark. The tract at residues 1621–1684 (IAKSKEGKKR…FMDESSSNAV (64 aa)) is disordered. Over residues 1623-1632 (KSKEGKKRGT) the composition is skewed to basic and acidic residues.

Palmitoylated.

The protein resides in the cell membrane. It is found in the cell junction. Its subcellular location is the adherens junction. It localises to the cell projection. The protein localises to the lamellipodium. The protein resides in the cytoplasm. It is found in the postsynapse. Its subcellular location is the presynapse. Functionally, scaffold protein involved in different aspects of polarized cells differentiation regulating epithelial and neuronal morphogenesis. Regulates the caudal migration of the nVII motor neurons. Required for convergent extension movements during gastrulation. This is Protein scribble homolog (scrib) from Danio rerio (Zebrafish).